The chain runs to 375 residues: Antichymotrypsin-2 (375 aa).

It belongs to the serpin family. In terms of tissue distribution, hemolymph.

Its subcellular location is the secreted. This Bombyx mori (Silk moth) protein is Antichymotrypsin-2.